A 65-amino-acid chain; its full sequence is Large ribosomal subunit protein bL35 (65 aa).

The disordered stretch occupies residues M1 to Q26.

The protein belongs to the bacterial ribosomal protein bL35 family.

The sequence is that of Large ribosomal subunit protein bL35 from Idiomarina loihiensis (strain ATCC BAA-735 / DSM 15497 / L2-TR).